The primary structure comprises 328 residues: Ketol-acid reductoisomerase (NADP(+)) (328 aa).

Positions 1-181 (MKIYYENDID…GLARAGVLET (181 aa)) constitute a KARI N-terminal Rossmann domain. Residues 24–27 (YGSQ), arginine 47, serine 52, and 82–85 (DEIQ) each bind NADP(+). The active site involves histidine 107. Glycine 133 is an NADP(+) binding site. The KARI C-terminal knotted domain maps to 182–327 (TFREETETDL…SKLRKLCGLE (146 aa)). Mg(2+) is bound by residues aspartate 190, glutamate 194, glutamate 226, and glutamate 230. Serine 251 lines the substrate pocket.

Belongs to the ketol-acid reductoisomerase family. Mg(2+) serves as cofactor.

It catalyses the reaction (2R)-2,3-dihydroxy-3-methylbutanoate + NADP(+) = (2S)-2-acetolactate + NADPH + H(+). It carries out the reaction (2R,3R)-2,3-dihydroxy-3-methylpentanoate + NADP(+) = (S)-2-ethyl-2-hydroxy-3-oxobutanoate + NADPH + H(+). Its pathway is amino-acid biosynthesis; L-isoleucine biosynthesis; L-isoleucine from 2-oxobutanoate: step 2/4. It participates in amino-acid biosynthesis; L-valine biosynthesis; L-valine from pyruvate: step 2/4. Functionally, involved in the biosynthesis of branched-chain amino acids (BCAA). Catalyzes an alkyl-migration followed by a ketol-acid reduction of (S)-2-acetolactate (S2AL) to yield (R)-2,3-dihydroxy-isovalerate. In the isomerase reaction, S2AL is rearranged via a Mg-dependent methyl migration to produce 3-hydroxy-3-methyl-2-ketobutyrate (HMKB). In the reductase reaction, this 2-ketoacid undergoes a metal-dependent reduction by NADPH to yield (R)-2,3-dihydroxy-isovalerate. The sequence is that of Ketol-acid reductoisomerase (NADP(+)) from Methanothermobacter thermautotrophicus (strain ATCC 29096 / DSM 1053 / JCM 10044 / NBRC 100330 / Delta H) (Methanobacterium thermoautotrophicum).